Consider the following 153-residue polypeptide: Large ribosomal subunit protein uL23m (153 aa).

The disordered stretch occupies residues 110 to 153 (IFPEKDKKSKEGSVEEMHEKFMEDERQRQKPDPRRGGVTEWFGL). A compositionally biased stretch (basic and acidic residues) spans 111-146 (FPEKDKKSKEGSVEEMHEKFMEDERQRQKPDPRRGG).

This sequence belongs to the universal ribosomal protein uL23 family. In terms of assembly, component of the mitochondrial ribosome large subunit (39S) which comprises a 16S rRNA and about 50 distinct proteins.

The protein localises to the mitochondrion. The chain is Large ribosomal subunit protein uL23m (mrpl23) from Danio rerio (Zebrafish).